A 1146-amino-acid chain; its full sequence is Ankyrin repeat domain-containing protein 24 (1146 aa).

ANK repeat units follow at residues Glu81–Ser110, Ala114–Val143, Ser147–Pro176, Ser180–Asp209, and Gln213–Ile242. 3 disordered regions span residues Arg272 to Arg320, Arg607 to Ala627, and Glu766 to Thr785. Residues Glu286–Gly297 are compositionally biased toward polar residues. Positions Arg320 to Glu517 form a coiled coil. The stretch at Ala714–Ala1110 forms a coiled coil.

As to quaternary structure, homodimer. Interacts (via C-terminal domain) with TRIOBP (via C-terminal domain) isoform 4; recruits TRIOBP isoform 4 to stereocilia rootlets.

It is found in the cell membrane. Its subcellular location is the cell projection. The protein localises to the stereocilium. In terms of biological role, component of the stereocilia rootlet in hair cells of inner ear. Bridges the apical plasma membrane with the lower rootlet and maintains normal distribution of TRIOBP, thereby reinforcing stereocilia insertion points and organizing rootlets for hearing with long-term resilience. The chain is Ankyrin repeat domain-containing protein 24 from Homo sapiens (Human).